A 1236-amino-acid chain; its full sequence is MAHWTIEQEEAINARNSNLLVAAAAGSGKTTVLVERIIQLVLRDRIDIDRLLIVTFTQAAAGEMRERINAAFFKELEKGREDGHLRRQLYLLNRSSISTIHAFCSDVVRQHFHLVNIDPHFRIADSTETELIKMEVLEELLDGEYEKGNDGFLDLVEAFGSNKDDKPLEALILRLHSFIQSHPQPLSWLEEKIDNLALGEDNWAENPWASELSQQIKIELSAAQDILNQALKLSNKAGGPRGYLEAIESDQKWVELLLKAADQGLPVLYSCLQQLSFTRLGRVSRDVDENLKNQVKILRDESKKILNAINSLLGRDPLEYLQDLNEIYSLMKYLGEIIQSFAEIYQEKKREKGIVDFNDLEHLALQILSNEAVAREYRDYYSYLFIDEYQDSNLVQETILNYIKKEDNLFMVGDVKQSIYRFRLADPSLFLEKQKSYPLQDGSVNRRVDLNKNFRSHPEILNAVNYIFRHLMSEELGEIDYDEKSYLYPGLNTGQELKYQEIDKASSQEGKEKENTAKRVEICILENNPDLITKLEENETEEREIPGEAENDFIERIIEMDNTEIEALLIAQKIRQLIQEDIYDPELQCMRKIEYRDMVILLRATRNSAGIFMEQLSAEGIPVYADASSGYFDTLELNLFINLLRLIDNKRQDIALLSVMRSPIGGFSIDDFIKIRTKLIPRREKQPYSFYEAMEFYMEDNNDDLKDRLVFFIQRLKEWELESRIMALDEFMGKLFMDTGYYYYAGAMPGGGQRQANLRILLHRAREFQKSSFKGLFSFIKYIEKIKSSGSDMGNACIIGENDNVVRIMSIHKSKGLEFPVVILGGLGKNFNIRDSNENVLLHRKLGIGPRYINTQLRTYHDTIARLAIKNRIKLENLAEEMRILYVACTRPQEKLIMVGTTRQLESAWRRWSQPVNSYNQSRARSFLDWLIPIIMRHKKEGQYLREIAGGDWDREILWEDESRWKVKLISPWQLTAEEIRKKEEKYEWERLLEQGGYSCPSAESEEIIKRLNWKYPYQEAENIPAKLSVSQVSQISSGYLEDGAADTFLTRVPAFLSGEKDKKTRLSPADKGSIVHLVMQNIDYRRVSREDSINQQLGEMVEREILTSEQLAVVEVNKIWRFFQTKLGQRVLQAKWLFREAPFNLLIAASEVFPALESQEELLIQGIIDLYFYEGEDIVLLDFKSDIVHHKSEEEILAPYRVQLKLYKRALENITDHRVKESYLYFFDLNRAIRV.

The UvrD-like helicase ATP-binding domain occupies 2–457 (AHWTIEQEEA…VDLNKNFRSH (456 aa)). 23-30 (AAAGSGKT) contributes to the ATP binding site. Residues 515 to 816 (NTAKRVEICI…RIMSIHKSKG (302 aa)) enclose the UvrD-like helicase C-terminal domain.

Belongs to the helicase family. AddA subfamily. As to quaternary structure, heterodimer of AddA and AddB/RexB. Requires Mg(2+) as cofactor.

The catalysed reaction is Couples ATP hydrolysis with the unwinding of duplex DNA by translocating in the 3'-5' direction.. The enzyme catalyses ATP + H2O = ADP + phosphate + H(+). Its function is as follows. The heterodimer acts as both an ATP-dependent DNA helicase and an ATP-dependent, dual-direction single-stranded exonuclease. Recognizes the chi site generating a DNA molecule suitable for the initiation of homologous recombination. The AddA nuclease domain is required for chi fragment generation; this subunit has the helicase and 3' -&gt; 5' nuclease activities. This Syntrophomonas wolfei subsp. wolfei (strain DSM 2245B / Goettingen) protein is ATP-dependent helicase/nuclease subunit A.